We begin with the raw amino-acid sequence, 354 residues long: Homer protein homolog 2 (354 aa).

The 110-residue stretch at Met-1–Ala-110 folds into the WH1 domain. The stretch at Ser-92 to Lys-120 forms a coiled coil. Residues Arg-114–Lys-163 are disordered. Polar residues predominate over residues Thr-123 to Gly-146. Positions Thr-160–Phe-329 form a coiled coil.

Belongs to the Homer family. As to quaternary structure, isoform 1 and isoform 2 encode coiled-coil structures that mediate homo- and heteromultimerization. Interacts with NFATC2; interaction is reduced by AKT activation. Interacts with NFATC1 and NFATC4. Interacts with DAGLA (via PPXXF motif); this interaction is required for the cell membrane localization of DAGLA. Constitutively expressed in the adult hippocampus.

The protein resides in the cytoplasm. The protein localises to the cell membrane. It localises to the postsynaptic density. Its subcellular location is the synapse. It is found in the cell projection. The protein resides in the stereocilium. In terms of biological role, postsynaptic density scaffolding protein. Binds and cross-links cytoplasmic regions of GRM1, GRM5, ITPR1, DNM3, RYR1, RYR2, SHANK1 and SHANK3. By physically linking GRM1 and GRM5 with ER-associated ITPR1 receptors, it aids the coupling of surface receptors to intracellular calcium release. May also couple GRM1 to PI3 kinase through its interaction with AGAP2. Isoforms can be differently regulated and may play an important role in maintaining the plasticity at glutamatergic synapses. Required for normal hearing. Negatively regulates T cell activation by inhibiting the calcineurin-NFAT pathway. Acts by competing with calcineurin/PPP3CA for NFAT protein binding, hence preventing NFAT activation by PPP3CA. The protein is Homer protein homolog 2 of Rattus norvegicus (Rat).